Here is a 74-residue protein sequence, read N- to C-terminus: Large ribosomal subunit protein uL29 (74 aa).

It belongs to the universal ribosomal protein uL29 family.

The chain is Large ribosomal subunit protein uL29 from Cyanothece sp. (strain PCC 7425 / ATCC 29141).